The following is a 395-amino-acid chain: MTEKIRECIRQFLQMEAAGGILLLVFSVGAVIFANSPLRDHYFSFLNAPVIIQFGSIVELNKPLLMWVNDGFMAIFFVLVGLEVKREMLIGAISSYQKAIFPAIAACGGMIVPALVYWLVNQGVPDYHGGWAIPMATDIAFAIGVLVLLGTRVPLALKVFLLALAIIDDLGAIIVIALFFSHDLSTKALILASIAIVGLILLNRFKVSNLIAYVVVGIILWVSVLKSGVHATLAGVIIGFCVPLKGKNNSEPLVEMEHAIAPWSSFLILPLFAFCNAGIPLSGLGMEALTSPLTLGVTLGLLLGKPIGVFLFSYLSVKLHIAKLPEGINFKQIFAVSVLCGIGFTMSMFLASLAFGGGDGHLTAYARLGILFGSSVSAVVGYWLLFVTTKENANQ.

Helical transmembrane passes span 18–38, 64–84, 100–120, 129–149, 160–180, 182–202, 205–225, 226–246, 266–286, 295–315, 333–353, and 368–388; these read AGGILLLVFSVGAVIFANSPL, LLMWVNDGFMAIFFVLVGLEV, IFPAIAACGGMIVPALVYWLV, GGWAIPMATDIAFAIGVLVLL, FLLALAIIDDLGAIIVIALFF, HDLSTKALILASIAIVGLILL, FKVSNLIAYVVVGIILWVSVL, KSGVHATLAGVIIGFCVPLKG, FLILPLFAFCNAGIPLSGLGM, LGVTLGLLLGKPIGVFLFSYL, IFAVSVLCGIGFTMSMFLASL, and LGILFGSSVSAVVGYWLLFVT.

Belongs to the NhaA Na(+)/H(+) (TC 2.A.33) antiporter family.

The protein resides in the cell inner membrane. It catalyses the reaction Na(+)(in) + 2 H(+)(out) = Na(+)(out) + 2 H(+)(in). Its function is as follows. Na(+)/H(+) antiporter that extrudes sodium in exchange for external protons. The protein is Na(+)/H(+) antiporter NhaA of Histophilus somni (strain 129Pt) (Haemophilus somnus).